We begin with the raw amino-acid sequence, 441 residues long: Argininosuccinate lyase (441 aa).

This sequence belongs to the lyase 1 family. Argininosuccinate lyase subfamily.

It is found in the cytoplasm. It carries out the reaction 2-(N(omega)-L-arginino)succinate = fumarate + L-arginine. Its pathway is amino-acid biosynthesis; L-arginine biosynthesis; L-arginine from L-ornithine and carbamoyl phosphate: step 3/3. This Thermoanaerobacter pseudethanolicus (strain ATCC 33223 / 39E) (Clostridium thermohydrosulfuricum) protein is Argininosuccinate lyase.